The following is a 219-amino-acid chain: Phosphatidylserine decarboxylase proenzyme (219 aa).

Residue S188 is the Schiff-base intermediate with substrate; via pyruvic acid of the active site. S188 is modified (pyruvic acid (Ser); by autocatalysis).

The protein belongs to the phosphatidylserine decarboxylase family. PSD-A subfamily. As to quaternary structure, heterodimer of a large membrane-associated beta subunit and a small pyruvoyl-containing alpha subunit. The cofactor is pyruvate. Post-translationally, is synthesized initially as an inactive proenzyme. Formation of the active enzyme involves a self-maturation process in which the active site pyruvoyl group is generated from an internal serine residue via an autocatalytic post-translational modification. Two non-identical subunits are generated from the proenzyme in this reaction, and the pyruvate is formed at the N-terminus of the alpha chain, which is derived from the carboxyl end of the proenzyme. The post-translation cleavage follows an unusual pathway, termed non-hydrolytic serinolysis, in which the side chain hydroxyl group of the serine supplies its oxygen atom to form the C-terminus of the beta chain, while the remainder of the serine residue undergoes an oxidative deamination to produce ammonia and the pyruvoyl prosthetic group on the alpha chain.

The protein resides in the cell membrane. The enzyme catalyses a 1,2-diacyl-sn-glycero-3-phospho-L-serine + H(+) = a 1,2-diacyl-sn-glycero-3-phosphoethanolamine + CO2. The protein operates within phospholipid metabolism; phosphatidylethanolamine biosynthesis; phosphatidylethanolamine from CDP-diacylglycerol: step 2/2. In terms of biological role, catalyzes the formation of phosphatidylethanolamine (PtdEtn) from phosphatidylserine (PtdSer). This chain is Phosphatidylserine decarboxylase proenzyme, found in Ruegeria pomeroyi (strain ATCC 700808 / DSM 15171 / DSS-3) (Silicibacter pomeroyi).